The following is a 298-amino-acid chain: N-acetylmuramic acid 6-phosphate etherase (298 aa).

Residues 55–218 (IHAQVSGGGR…STGLMIKSGK (164 aa)) enclose the SIS domain. E83 (proton donor) is an active-site residue. E114 is an active-site residue.

It belongs to the GCKR-like family. MurNAc-6-P etherase subfamily. As to quaternary structure, homodimer.

The enzyme catalyses N-acetyl-D-muramate 6-phosphate + H2O = N-acetyl-D-glucosamine 6-phosphate + (R)-lactate. It functions in the pathway amino-sugar metabolism; 1,6-anhydro-N-acetylmuramate degradation. The protein operates within amino-sugar metabolism; N-acetylmuramate degradation. Its pathway is cell wall biogenesis; peptidoglycan recycling. Functionally, specifically catalyzes the cleavage of the D-lactyl ether substituent of MurNAc 6-phosphate, producing GlcNAc 6-phosphate and D-lactate. Together with AnmK, is also required for the utilization of anhydro-N-acetylmuramic acid (anhMurNAc) either imported from the medium or derived from its own cell wall murein, and thus plays a role in cell wall recycling. This chain is N-acetylmuramic acid 6-phosphate etherase, found in Escherichia coli O7:K1 (strain IAI39 / ExPEC).